The following is a 329-amino-acid chain: MPCPRPFWLRHSRAPQGSGPSSPGSLSAPRSPSRGEDQEEEEEEEGDGSPGSGPILPPASPVECLICVSSFDGVFKLPKRLDCGHVFCLECLARLSLATAGGGNAVACPVCRAPTRLAPRRGLPALPTQSGLLPRDARAPPSRQGSVRFDRRRGLLYLRPPPPPPGPRKARAPPPPPPLRLGRPLSRRLSLASPAWVFNAAVALAVLVAAGLVVSGVYIFFLIPHATSSGPPRPQLVALAPAPGFSWFPPRPPPGSPWAPAWTPRPTGPDLDTALPGTAEDALEPEAGPEDPAEAERTLDRRSDGTWGTEAGPGWAPWPRGARRLWGSQ.

The interval 1–55 (MPCPRPFWLRHSRAPQGSGPSSPGSLSAPRSPSRGEDQEEEEEEEGDGSPGSGPI) is disordered. The segment covering 14-32 (APQGSGPSSPGSLSAPRSP) has biased composition (low complexity). The span at 37-47 (DQEEEEEEEGD) shows a compositional bias: acidic residues. The RING-type zinc-finger motif lies at 64 to 112 (CLICVSSFDGVFKLPKRLDCGHVFCLECLARLSLATAGGGNAVACPVCR). The tract at residues 122–181 (GLPALPTQSGLLPRDARAPPSRQGSVRFDRRRGLLYLRPPPPPPGPRKARAPPPPPPLRL) is disordered. A compositionally biased stretch (pro residues) spans 159–179 (RPPPPPPGPRKARAPPPPPPL). A helical transmembrane segment spans residues 203-223 (ALAVLVAAGLVVSGVYIFFLI). The interval 248–329 (FPPRPPPGSP…RGARRLWGSQ (82 aa)) is disordered. Residues 281–293 (DALEPEAGPEDPA) are compositionally biased toward acidic residues. Residues 294–304 (EAERTLDRRSD) show a composition bias toward basic and acidic residues.

The protein localises to the membrane. This Homo sapiens (Human) protein is RING finger protein 225.